We begin with the raw amino-acid sequence, 133 residues long: Phosphoribosyl-AMP cyclohydrolase (133 aa).

A Mg(2+)-binding site is contributed by Asp90. Position 91 (Cys91) interacts with Zn(2+). Positions 92 and 94 each coordinate Mg(2+). Cys107 and Cys114 together coordinate Zn(2+).

The protein belongs to the PRA-CH family. As to quaternary structure, homodimer. Mg(2+) is required as a cofactor. The cofactor is Zn(2+).

Its subcellular location is the cytoplasm. The enzyme catalyses 1-(5-phospho-beta-D-ribosyl)-5'-AMP + H2O = 1-(5-phospho-beta-D-ribosyl)-5-[(5-phospho-beta-D-ribosylamino)methylideneamino]imidazole-4-carboxamide. It functions in the pathway amino-acid biosynthesis; L-histidine biosynthesis; L-histidine from 5-phospho-alpha-D-ribose 1-diphosphate: step 3/9. In terms of biological role, catalyzes the hydrolysis of the adenine ring of phosphoribosyl-AMP. The sequence is that of Phosphoribosyl-AMP cyclohydrolase from Streptomyces avermitilis (strain ATCC 31267 / DSM 46492 / JCM 5070 / NBRC 14893 / NCIMB 12804 / NRRL 8165 / MA-4680).